The following is a 157-amino-acid chain: Small ribosomal subunit protein uS7 (157 aa).

It belongs to the universal ribosomal protein uS7 family. In terms of assembly, part of the 30S ribosomal subunit. Contacts proteins S9 and S11.

One of the primary rRNA binding proteins, it binds directly to 16S rRNA where it nucleates assembly of the head domain of the 30S subunit. Is located at the subunit interface close to the decoding center, probably blocks exit of the E-site tRNA. This is Small ribosomal subunit protein uS7 from Caulobacter vibrioides (strain ATCC 19089 / CIP 103742 / CB 15) (Caulobacter crescentus).